The sequence spans 405 residues: Argininosuccinate synthase (405 aa).

Residue 11 to 19 (AYSGGLDTS) participates in ATP binding. Position 90 (Y90) interacts with L-citrulline. G119 lines the ATP pocket. Positions 121, 125, and 126 each coordinate L-aspartate. N125 is an L-citrulline binding site. L-citrulline contacts are provided by R129, S178, S187, E263, and Y275.

This sequence belongs to the argininosuccinate synthase family. Type 1 subfamily. In terms of assembly, homotetramer.

Its subcellular location is the cytoplasm. It catalyses the reaction L-citrulline + L-aspartate + ATP = 2-(N(omega)-L-arginino)succinate + AMP + diphosphate + H(+). It participates in amino-acid biosynthesis; L-arginine biosynthesis; L-arginine from L-ornithine and carbamoyl phosphate: step 2/3. This chain is Argininosuccinate synthase, found in Legionella pneumophila (strain Corby).